Consider the following 138-residue polypeptide: Large ribosomal subunit protein uL16 (138 aa).

Positions 1–13 (MLQPKRRKYRKEQ) are enriched in basic residues. The interval 1–24 (MLQPKRRKYRKEQKGRNTGKATRG) is disordered.

This sequence belongs to the universal ribosomal protein uL16 family. In terms of assembly, part of the 50S ribosomal subunit.

In terms of biological role, binds 23S rRNA and is also seen to make contacts with the A and possibly P site tRNAs. This is Large ribosomal subunit protein uL16 from Cupriavidus necator (strain ATCC 17699 / DSM 428 / KCTC 22496 / NCIMB 10442 / H16 / Stanier 337) (Ralstonia eutropha).